The chain runs to 279 residues: Acetyl-coenzyme A carboxylase carboxyl transferase subunit beta (279 aa).

Residues 23 to 279 (LWWKCESCGA…LSQILGHLSS (257 aa)) enclose the CoA carboxyltransferase N-terminal domain. 4 residues coordinate Zn(2+): cysteine 27, cysteine 30, cysteine 46, and cysteine 49. The C4-type zinc finger occupies 27-49 (CESCGAMLHKKQVEDHFYTCCEC).

The protein belongs to the AccD/PCCB family. Acetyl-CoA carboxylase is a heterohexamer composed of biotin carboxyl carrier protein (AccB), biotin carboxylase (AccC) and two subunits each of ACCase subunit alpha (AccA) and ACCase subunit beta (AccD). Requires Zn(2+) as cofactor.

It localises to the cytoplasm. The enzyme catalyses N(6)-carboxybiotinyl-L-lysyl-[protein] + acetyl-CoA = N(6)-biotinyl-L-lysyl-[protein] + malonyl-CoA. It participates in lipid metabolism; malonyl-CoA biosynthesis; malonyl-CoA from acetyl-CoA: step 1/1. Functionally, component of the acetyl coenzyme A carboxylase (ACC) complex. Biotin carboxylase (BC) catalyzes the carboxylation of biotin on its carrier protein (BCCP) and then the CO(2) group is transferred by the transcarboxylase to acetyl-CoA to form malonyl-CoA. The chain is Acetyl-coenzyme A carboxylase carboxyl transferase subunit beta from Prosthecochloris aestuarii (strain DSM 271 / SK 413).